Here is a 353-residue protein sequence, read N- to C-terminus: Zinc transporter 5 (353 aa).

The first 27 residues, 1-27, serve as a signal peptide directing secretion; that stretch reads MATAAMTKVFVLLFLVAACYLPAHAAA. The Extracellular portion of the chain corresponds to 28–48; the sequence is AECDCATDTAGRDKAQALRLK. The helical transmembrane segment at 49–69 threads the bilayer; that stretch reads VIAIFCILAGSTVGAALPSLG. The Cytoplasmic segment spans residues 70-86; it reads GRFPAIQPETDVFLSVK. The chain crosses the membrane as a helical span at residues 87 to 107; it reads AFAGGVILATGLVHILPAAFE. Over 108 to 121 the chain is Extracellular; it reads ALSSPCLVGGPWKR. A helical membrane pass occupies residues 122–142; it reads FPFAGMVAMVSAIGTLIVDTV. The Cytoplasmic portion of the chain corresponds to 143–198; that stretch reads ATGYFHRTDAKRKAAAVADEPADDLEASDEHSHGHAHGMSVMSVAPAGEEDLVRHR. The chain crosses the membrane as a helical span at residues 199–219; the sequence is VISQVLELGVVVHSLIIGMSL. The Extracellular portion of the chain corresponds to 220–230; sequence GASDFPSTVRP. A helical transmembrane segment spans residues 231–251; that stretch reads LVPALTFHQFFEGIGLGGCIV. The Cytoplasmic portion of the chain corresponds to 252–260; sequence QAKFRVRSV. The helical transmembrane segment at 261–281 threads the bilayer; the sequence is VTMALFFSLTTPAGIVVGIGI. The Extracellular segment spans residues 282 to 292; that stretch reads SSVYDANSPTA. Residues 293–313 traverse the membrane as a helical segment; that stretch reads LVVQGLLEAAAAGILVYMALV. At 314–332 the chain is on the cytoplasmic side; sequence DILAEDFMKTKVQRRGRLQ. A helical membrane pass occupies residues 333-353; that stretch reads LAMNVALLLGAGLMSMIAIWA.

Belongs to the ZIP transporter (TC 2.A.5) family.

The protein resides in the cell membrane. In terms of biological role, zinc transporter that mediates zinc uptake from the rhizosphere and may be responsible for the translocation of zinc within the plant. This Oryza sativa subsp. japonica (Rice) protein is Zinc transporter 5 (ZIP5).